Consider the following 876-residue polypeptide: Alanine--tRNA ligase (876 aa).

4 residues coordinate Zn(2+): His-565, His-569, Cys-667, and His-671.

The protein belongs to the class-II aminoacyl-tRNA synthetase family. Requires Zn(2+) as cofactor.

It localises to the cytoplasm. It carries out the reaction tRNA(Ala) + L-alanine + ATP = L-alanyl-tRNA(Ala) + AMP + diphosphate. In terms of biological role, catalyzes the attachment of alanine to tRNA(Ala) in a two-step reaction: alanine is first activated by ATP to form Ala-AMP and then transferred to the acceptor end of tRNA(Ala). Also edits incorrectly charged Ser-tRNA(Ala) and Gly-tRNA(Ala) via its editing domain. The polypeptide is Alanine--tRNA ligase (Staphylococcus aureus (strain Mu3 / ATCC 700698)).